Consider the following 202-residue polypeptide: Peptidyl-tRNA hydrolase (202 aa).

Tyr-14 is a binding site for tRNA. Residue His-19 is the Proton acceptor of the active site. TRNA contacts are provided by Phe-64, Asn-66, and Asn-112.

Belongs to the PTH family. As to quaternary structure, monomer.

It is found in the cytoplasm. It carries out the reaction an N-acyl-L-alpha-aminoacyl-tRNA + H2O = an N-acyl-L-amino acid + a tRNA + H(+). In terms of biological role, hydrolyzes ribosome-free peptidyl-tRNAs (with 1 or more amino acids incorporated), which drop off the ribosome during protein synthesis, or as a result of ribosome stalling. Functionally, catalyzes the release of premature peptidyl moieties from peptidyl-tRNA molecules trapped in stalled 50S ribosomal subunits, and thus maintains levels of free tRNAs and 50S ribosomes. The protein is Peptidyl-tRNA hydrolase of Methylobacterium radiotolerans (strain ATCC 27329 / DSM 1819 / JCM 2831 / NBRC 15690 / NCIMB 10815 / 0-1).